The chain runs to 176 residues: Inorganic pyrophosphatase (176 aa).

Residues K30, R44, and Y56 each coordinate substrate. Mg(2+) is bound by residues D66, D71, and D103. Position 142 (Y142) interacts with substrate.

It belongs to the PPase family. As to quaternary structure, homohexamer. Mg(2+) is required as a cofactor.

Its subcellular location is the cytoplasm. It carries out the reaction diphosphate + H2O = 2 phosphate + H(+). Its function is as follows. Catalyzes the hydrolysis of inorganic pyrophosphate (PPi) forming two phosphate ions. The chain is Inorganic pyrophosphatase from Escherichia coli O157:H7.